We begin with the raw amino-acid sequence, 43 residues long: Protein PsbN (43 aa).

Residues 7 to 27 (VAIFISCLLVSFTGYALYTAF) form a helical membrane-spanning segment.

It belongs to the PsbN family.

It localises to the plastid. Its subcellular location is the chloroplast thylakoid membrane. May play a role in photosystem I and II biogenesis. In Huperzia lucidula (Shining clubmoss), this protein is Protein PsbN.